The sequence spans 315 residues: Ribosomal RNA small subunit methyltransferase H (315 aa).

S-adenosyl-L-methionine contacts are provided by residues 35–37, Asp55, Phe84, Asp105, and Gln112; that span reads AGH.

It belongs to the methyltransferase superfamily. RsmH family.

It is found in the cytoplasm. The enzyme catalyses cytidine(1402) in 16S rRNA + S-adenosyl-L-methionine = N(4)-methylcytidine(1402) in 16S rRNA + S-adenosyl-L-homocysteine + H(+). Its function is as follows. Specifically methylates the N4 position of cytidine in position 1402 (C1402) of 16S rRNA. The chain is Ribosomal RNA small subunit methyltransferase H from Streptococcus agalactiae serotype Ia (strain ATCC 27591 / A909 / CDC SS700).